Reading from the N-terminus, the 282-residue chain is MPNIPTIPLASWIDKLVDGLTQFEGFFNVITNIIGGIVDAFQWVFDLVPPWLFIILLVFGTFWVNRKGKKWGLIIFEVVGLLLIWNLDFWRDMTQTLTLVLTSSLIALVIGVPLGIWMAKSNIVESIFKPVLDFMQTMPAFVYLIPAVAFFGIGMVPGVVASVIFAMPPTVRMTNLGIRQVSTELVEAADSFGSTPWQKLWKVQLPMAKSTMMAGINQSIMLALSMVVIASMIGAMGLGTRVYFAVGRNDAGGGFVAGIAIVIVAIILDRLTQAFNKKAKSE.

6 helical membrane passes run 44-64 (VFDL…TFWV), 70-90 (KWGL…LDFW), 99-119 (LVLT…IWMA), 140-160 (AFVY…PGVV), 220-240 (IMLA…GLGT), and 251-271 (AGGG…LDRL). In terms of domain architecture, ABC transmembrane type-1 spans 93–272 (MTQTLTLVLT…IVAIILDRLT (180 aa)).

Belongs to the binding-protein-dependent transport system permease family. In terms of assembly, the complex is composed of two ATP-binding proteins (GbuA), two transmembrane proteins (GbuB) and a solute-binding protein (GbuC).

It is found in the cell membrane. Its activity is regulated as follows. The complex is activated by an osmotic gradient or by low temperature. Its function is as follows. Part of the ABC transporter complex GbuABC involved in glycine betaine uptake. Responsible for the translocation of the substrate across the membrane. Involved, with BetL and OpuC, in osmoprotection and cryoprotection of Listeria. Can also uptake carnitine when carnitine is abundant in the growth medium. The protein is Glycine betaine/carnitine transport permease protein GbuB (gbuB) of Listeria monocytogenes serotype 1/2a (strain 10403S).